The chain runs to 162 residues: Large ribosomal subunit protein uL10 (162 aa).

Belongs to the universal ribosomal protein uL10 family. In terms of assembly, part of the ribosomal stalk of the 50S ribosomal subunit. The N-terminus interacts with L11 and the large rRNA to form the base of the stalk. The C-terminus forms an elongated spine to which L12 dimers bind in a sequential fashion forming a multimeric L10(L12)X complex.

Its function is as follows. Forms part of the ribosomal stalk, playing a central role in the interaction of the ribosome with GTP-bound translation factors. The protein is Large ribosomal subunit protein uL10 of Vibrio cholerae serotype O1 (strain ATCC 39541 / Classical Ogawa 395 / O395).